The primary structure comprises 202 residues: Probable 1-Cys peroxiredoxin (202 aa).

The 148-residue stretch at 1–148 (STHGKIRIHD…VVRAVDSLLT (148 aa)) folds into the Thioredoxin domain. C30 functions as the Cysteine sulfenic acid (-SOH) intermediate in the catalytic mechanism. A Bipartite nuclear localization signal motif is present at residues 178–201 (KKLFPQGFETKDLPSKKGYLRFTK).

The protein belongs to the peroxiredoxin family. Prx6 subfamily. Embryos.

The protein resides in the nucleus. It is found in the cytoplasm. It carries out the reaction a hydroperoxide + [thioredoxin]-dithiol = an alcohol + [thioredoxin]-disulfide + H2O. In terms of biological role, thiol-specific peroxidase that catalyzes the reduction of hydrogen peroxide and organic hydroperoxides to water and alcohols, respectively. Seems to contribute to the inhibition of germination during stress. The protein is Probable 1-Cys peroxiredoxin of Bromus secalinus (Rye brome).